Consider the following 398-residue polypeptide: Cyclin-dependent kinase D-1 (398 aa).

The 281-residue stretch at Tyr-11–Phe-291 folds into the Protein kinase domain. ATP-binding positions include Leu-17–Val-25 and Lys-40. The residue at position 22 (Tyr-22) is a Phosphotyrosine. The active-site Proton acceptor is the Asp-133. Ser-160 is modified (phosphoserine). At Thr-166 the chain carries Phosphothreonine. A disordered region spans residues Ser-296–Lys-318. Residues Ser-308–Lys-318 are compositionally biased toward basic and acidic residues.

It belongs to the protein kinase superfamily. CMGC Ser/Thr protein kinase family. CDC2/CDKX subfamily. In terms of processing, autophosphorylated. As to expression, expressed at low levels in suspension cell culture, but not in plant organs.

It localises to the nucleus. The catalysed reaction is L-seryl-[protein] + ATP = O-phospho-L-seryl-[protein] + ADP + H(+). It catalyses the reaction L-threonyl-[protein] + ATP = O-phospho-L-threonyl-[protein] + ADP + H(+). It carries out the reaction [DNA-directed RNA polymerase] + ATP = phospho-[DNA-directed RNA polymerase] + ADP + H(+). This is Cyclin-dependent kinase D-1 (CDKD-1) from Arabidopsis thaliana (Mouse-ear cress).